The following is a 357-amino-acid chain: Solute carrier family 25 member 3 (357 aa).

A mitochondrion-targeting transit peptide spans 1–45; that stretch reads MFSSVAHLARANPFNAPHLQLVHDGLSGPRSPPAPPRRSRHLAAA. Topologically, residues 46–58 are mitochondrial intermembrane; the sequence is AVEEYSCEFGSMK. Solcar repeat units follow at residues 58 to 142, 155 to 239, and 256 to 334; these read KYYA…FKAL, WRTS…TVEA, and EQLV…VKVY. Residues 59 to 81 traverse the membrane as a helical segment; sequence YYALCGFGGVLSCGLTHTAVVPL. Topologically, residues 82–116 are mitochondrial matrix; it reads DLVKCRMQVDPQKYKGIFNGFSITLKEDGVRGLAK. Lys-94 carries the post-translational modification N6-acetyllysine. N6-methyllysine is present on Lys-107. A helical membrane pass occupies residues 117–136; that stretch reads GWAPTLIGYSMQGLCKFGFY. The Mitochondrial intermembrane portion of the chain corresponds to 137–156; sequence EVFKALYSNILGEENTYLWR. Residues 157 to 178 form a helical membrane-spanning segment; sequence TSLYLASSASAEFFADIALAPM. The Mitochondrial matrix portion of the chain corresponds to 179–213; that stretch reads EAAKVRIQTQPGYANTLREAVPKMYKEEGLNAFYK. A Phosphotyrosine modification is found at Tyr-191. At Lys-204 the chain carries N6-acetyllysine. Residues 214-233 traverse the membrane as a helical segment; sequence GVAPLWMRQIPYTMMKFACF. Residues 234–256 lie on the Mitochondrial intermembrane side of the membrane; the sequence is ERTVEALYKFVVPKPRSECTKAE. The chain crosses the membrane as a helical span at residues 257–279; that stretch reads QLVVTFVAGYIAGVFCAIVSHPA. At 280 to 309 the chain is on the mitochondrial matrix side; that stretch reads DSVVSVLNKEKGSTASQVLQRLGFRGVWKG. Residues 310–328 traverse the membrane as a helical segment; sequence LFARIIMIGTLTALQWFIY. At 329-357 the chain is on the mitochondrial intermembrane side; the sequence is DSVKVYFRLPRPPPPEMPESLKKKLGLTE.

It belongs to the mitochondrial carrier (TC 2.A.29) family. As to quaternary structure, interacts with PPIF; the interaction is impaired by CsA.

It is found in the mitochondrion inner membrane. It carries out the reaction phosphate(in) + H(+)(in) = phosphate(out) + H(+)(out). Inorganic ion transporter that transports phosphate or copper ions across the mitochondrial inner membrane into the matrix compartment. Mediates proton-coupled symport of phosphate ions necessary for mitochondrial oxidative phosphorylation of ADP to ATP. Transports copper ions probably in the form of anionic copper(I) complexes to maintain mitochondrial matrix copper pool and to supply copper for cytochrome C oxidase complex assembly. May also play a role in regulation of the mitochondrial permeability transition pore (mPTP). The chain is Solute carrier family 25 member 3 from Mus musculus (Mouse).